The chain runs to 744 residues: Translation initiation factor IF-2, chloroplastic (744 aa).

Residues 113 to 146 (NSEGSFKSGKQKKKEKGKHKQNVNKDIHHTKNNR) are disordered. A compositionally biased stretch (basic residues) spans 121-134 (GKQKKKEKGKHKQN). Positions 244–417 (NRAPIVTILG…CSLAEFINLK (174 aa)) constitute a tr-type G domain. Residues 253-260 (GHVDHGKT) are G1. A GTP-binding site is contributed by 253–260 (GHVDHGKT). The tract at residues 278-282 (GITQS) is G2. A G3 region spans residues 303–306 (DTPG). GTP is bound by residues 303 to 307 (DTPGH) and 357 to 360 (NKID). The G4 stretch occupies residues 357-360 (NKID). The tract at residues 393–395 (SAL) is G5.

It belongs to the TRAFAC class translation factor GTPase superfamily. Classic translation factor GTPase family. IF-2 subfamily.

The protein localises to the plastid. The protein resides in the chloroplast. Its function is as follows. One of the essential components for the initiation of protein synthesis. Protects formylmethionyl-tRNA from spontaneous hydrolysis and promotes its binding to the 30S ribosomal subunits. Also involved in the hydrolysis of GTP during the formation of the 70S ribosomal complex. In Gracilaria tenuistipitata var. liui (Red alga), this protein is Translation initiation factor IF-2, chloroplastic (infB).